Reading from the N-terminus, the 251-residue chain is 5-oxoprolinase subunit A (251 aa).

Belongs to the LamB/PxpA family. As to quaternary structure, forms a complex composed of PxpA, PxpB and PxpC.

It catalyses the reaction 5-oxo-L-proline + ATP + 2 H2O = L-glutamate + ADP + phosphate + H(+). Catalyzes the cleavage of 5-oxoproline to form L-glutamate coupled to the hydrolysis of ATP to ADP and inorganic phosphate. This is 5-oxoprolinase subunit A from Vibrio campbellii (strain ATCC BAA-1116).